A 105-amino-acid polypeptide reads, in one-letter code: MTRRLRVHNGVEDDLFEAFSYYADAAPDQIDRLYNLFVDAVTKRIPQAPNAFAPLFKHYRHIYLRPFRYYVAYRTTDEAIDILAVRHGMENPNAVEAEISGRTFE.

The protein belongs to the RelE toxin family.

Toxic component of a type II toxin-antitoxin (TA) system. Its toxic effect is neutralized by coexpression with cognate antitoxin ParD2. This Mycobacterium tuberculosis (strain CDC 1551 / Oshkosh) protein is Toxin ParE2 (parE2).